The primary structure comprises 124 residues: Small ribosomal subunit protein uS12 (124 aa).

The interval 1–23 is disordered; the sequence is MATINQLVRKPRKRPVAKSDVPA. At Asp-89 the chain carries 3-methylthioaspartic acid. The disordered stretch occupies residues 101 to 124; it reads ALDTSGVQNRRQGRSKYGTKRPKS. The segment covering 111–124 has biased composition (basic residues); the sequence is RQGRSKYGTKRPKS.

This sequence belongs to the universal ribosomal protein uS12 family. Part of the 30S ribosomal subunit. Contacts proteins S8 and S17. May interact with IF1 in the 30S initiation complex.

With S4 and S5 plays an important role in translational accuracy. In terms of biological role, interacts with and stabilizes bases of the 16S rRNA that are involved in tRNA selection in the A site and with the mRNA backbone. Located at the interface of the 30S and 50S subunits, it traverses the body of the 30S subunit contacting proteins on the other side and probably holding the rRNA structure together. The combined cluster of proteins S8, S12 and S17 appears to hold together the shoulder and platform of the 30S subunit. In Chromohalobacter salexigens (strain ATCC BAA-138 / DSM 3043 / CIP 106854 / NCIMB 13768 / 1H11), this protein is Small ribosomal subunit protein uS12.